The following is a 595-amino-acid chain: Probable carotenoid cleavage dioxygenase 4, chloroplastic (595 aa).

The N-terminal 34 residues, 1–34 (MDSVSSSSFLSSTFSLHHSLLRRRSSSPTLLRIN), are a transit peptide targeting the chloroplast. The tract at residues 41-74 (RSPITNPSDNNDRRNKPKTLHNRTNHTLVSSPPK) is disordered. The span at 55–64 (NKPKTLHNRT) shows a compositional bias: basic residues. Residues His-287, His-336, His-404, and His-583 each contribute to the Fe cation site.

It belongs to the carotenoid oxygenase family. In terms of assembly, interacts with VAR3. Interacts with PGM48. It depends on Fe(2+) as a cofactor. Mostly expressed in flowers (e.g. sepals and petals), siliques, seeds, leaves and cotyledons.

The protein resides in the plastid. The protein localises to the chloroplast. It is found in the plastoglobule. Its function is as follows. May be involved in carotenoid cleavage. The sequence is that of Probable carotenoid cleavage dioxygenase 4, chloroplastic (CCD4) from Arabidopsis thaliana (Mouse-ear cress).